A 232-amino-acid polypeptide reads, in one-letter code: Glycerol-3-phosphate acyltransferase (232 aa).

Helical transmembrane passes span 4–24 (FLAI…IIAG), 56–76 (VVTL…VGFF), 90–110 (IALS…TVFA), 124–144 (MLIG…LLAV), 152–172 (VGSI…KYVF), and 191–211 (SLDY…IYTH).

This sequence belongs to the PlsY family. Probably interacts with PlsX.

It is found in the cell inner membrane. It carries out the reaction an acyl phosphate + sn-glycerol 3-phosphate = a 1-acyl-sn-glycero-3-phosphate + phosphate. Its pathway is lipid metabolism; phospholipid metabolism. Its function is as follows. Catalyzes the transfer of an acyl group from acyl-phosphate (acyl-PO(4)) to glycerol-3-phosphate (G3P) to form lysophosphatidic acid (LPA). This enzyme utilizes acyl-phosphate as fatty acyl donor, but not acyl-CoA or acyl-ACP. This chain is Glycerol-3-phosphate acyltransferase, found in Chlorobaculum tepidum (strain ATCC 49652 / DSM 12025 / NBRC 103806 / TLS) (Chlorobium tepidum).